The following is a 744-amino-acid chain: TonB-dependent heme receptor A (744 aa).

Positions 1–24 (MNILINKRIFLLVTLVGIQLNVTA) are cleaved as a signal peptide. Residues 45-157 (DDSNKLPGRS…FAGTVKFETK (113 aa)) enclose the TBDR plug domain. One can recognise a TBDR beta-barrel domain in the interval 168-744 (KIGGFLKYGN…NIKFSLSQKF (577 aa)).

Belongs to the TonB-dependent receptor family.

It is found in the cell outer membrane. Its function is as follows. Heme receptor. This chain is TonB-dependent heme receptor A (tdhA), found in Haemophilus influenzae (strain ATCC 51907 / DSM 11121 / KW20 / Rd).